We begin with the raw amino-acid sequence, 155 residues long: Egg-lysin (155 aa).

The first 18 residues, 1–18 (MKLLVLCLFAMMATLAVS), serve as a signal peptide directing secretion.

In terms of assembly, monomer. Homodimer. Molecules associate into dimers and then rapidly dissociate again. Interacts (as a monomer) with the egg vitelline layer protein VERL (via VERL repeats); each VERL chain can bind multiple copies of lysin. In terms of tissue distribution, sperm (at protein level).

Its subcellular location is the cytoplasmic vesicle. The protein localises to the secretory vesicle. The protein resides in the acrosome lumen. Its function is as follows. Creates a 3 um hole in the egg vitelline layer through which the sperm passes. Does not have enzyme activity. Species-specific interaction between the sperm protein lysin and the egg protein VERL exposes a basic surface on lysin that may dissociate the egg vitelline layer via electrostatic repulsion. Plays a role in ensuring species-specific fertilization. In Haliotis corrugata (Pink abalone), this protein is Egg-lysin.